The sequence spans 248 residues: uncharacterized protein (248 aa).

Residue serine 141 participates in substrate binding. Tyrosine 154 (proton acceptor) is an active-site residue.

It belongs to the short-chain dehydrogenases/reductases (SDR) family.

This is an uncharacterized protein from Methylorubrum extorquens (strain ATCC 14718 / DSM 1338 / JCM 2805 / NCIMB 9133 / AM1) (Methylobacterium extorquens).